A 511-amino-acid chain; its full sequence is Histidine ammonia-lyase (511 aa).

A cross-link (5-imidazolinone (Ala-Gly)) is located at residues 142 to 144 (ASG). Serine 143 carries the post-translational modification 2,3-didehydroalanine (Ser).

This sequence belongs to the PAL/histidase family. Contains an active site 4-methylidene-imidazol-5-one (MIO), which is formed autocatalytically by cyclization and dehydration of residues Ala-Ser-Gly.

It localises to the cytoplasm. It catalyses the reaction L-histidine = trans-urocanate + NH4(+). It functions in the pathway amino-acid degradation; L-histidine degradation into L-glutamate; N-formimidoyl-L-glutamate from L-histidine: step 1/3. This Brucella ovis (strain ATCC 25840 / 63/290 / NCTC 10512) protein is Histidine ammonia-lyase.